The following is a 358-amino-acid chain: 3-dehydroquinate synthase (358 aa).

NAD(+)-binding positions include aspartate 69–lysine 74, glycine 103–aspartate 107, threonine 127–threonine 128, lysine 140, lysine 149, and cysteine 167–threonine 170. 3 residues coordinate Zn(2+): glutamate 182, histidine 245, and histidine 262.

It belongs to the sugar phosphate cyclases superfamily. Dehydroquinate synthase family. Co(2+) serves as cofactor. Zn(2+) is required as a cofactor. It depends on NAD(+) as a cofactor.

The protein resides in the cytoplasm. The enzyme catalyses 7-phospho-2-dehydro-3-deoxy-D-arabino-heptonate = 3-dehydroquinate + phosphate. Its pathway is metabolic intermediate biosynthesis; chorismate biosynthesis; chorismate from D-erythrose 4-phosphate and phosphoenolpyruvate: step 2/7. Functionally, catalyzes the conversion of 3-deoxy-D-arabino-heptulosonate 7-phosphate (DAHP) to dehydroquinate (DHQ). The chain is 3-dehydroquinate synthase from Tolumonas auensis (strain DSM 9187 / NBRC 110442 / TA 4).